The following is a 222-amino-acid chain: Transmembrane reductase CYB561D2 (222 aa).

Topologically, residues 2 to 17 (ALSAETESHIYRALRT) are cytoplasmic. In terms of domain architecture, Cytochrome b561 spans 14 to 217 (ALRTASGAAA…NQVSNAYLYR (204 aa)). The chain crosses the membrane as a helical span at residues 18-38 (ASGAAAHLVALGFTIFVAVLA). Residues 39-46 (RPGSSLFS) lie on the Lumenal side of the membrane. A helical transmembrane segment spans residues 47 to 67 (WHPVLMSLAFSFLMTEALLVF). Histidine 48 is a heme b binding site. The Cytoplasmic segment spans residues 68–85 (SPESSLLHSLSRKGRARC). Heme b is bound by residues histidine 86 and histidine 120. Residues 86 to 106 (HWVLQLLALLCALLGLGLVIL) form a helical membrane-spanning segment. Over 107–122 (HKEQLGKAHLVTRHGQ) the chain is Lumenal. The helical transmembrane segment at 123–143 (AGLLAVLWAGLQCSGGVGLLY) threads the bilayer. At 144-162 (PKLLPRWPLAKLKLYHATS) the chain is on the cytoplasmic side. A heme b-binding site is contributed by histidine 159. The helical transmembrane segment at 163-183 (GLVGYLLGSASLLLGMCSLWF) threads the bilayer. At 184–186 (TAS) the chain is on the lumenal side. Residues 187–207 (VTGAAWYLAVLCPVLTSLVIM) traverse the membrane as a helical segment. Residues 208 to 222 (NQVSNAYLYRKRIQP) are Cytoplasmic-facing.

It depends on heme b as a cofactor.

It is found in the endoplasmic reticulum membrane. The protein localises to the cytoplasmic vesicle membrane. The enzyme catalyses monodehydro-L-ascorbate radical(out) + L-ascorbate(in) = monodehydro-L-ascorbate radical(in) + L-ascorbate(out). It catalyses the reaction Fe(3+)(out) + L-ascorbate(in) = monodehydro-L-ascorbate radical(in) + Fe(2+)(out) + H(+). Functionally, transmembrane reductase that may use ascorbate as an electron donor in the cytoplasm and transfer electrons across endoplasmic reticulum membranes to reduce monodehydro-L-ascorbate radical and iron cations Fe(3+) in the lumen of that compartment. This is Transmembrane reductase CYB561D2 from Homo sapiens (Human).